Consider the following 490-residue polypeptide: Glutamyl-tRNA(Gln) amidotransferase subunit A (490 aa).

Catalysis depends on charge relay system residues K78 and S153. Catalysis depends on S177, which acts as the Acyl-ester intermediate.

It belongs to the amidase family. GatA subfamily. In terms of assembly, heterotrimer of A, B and C subunits.

It catalyses the reaction L-glutamyl-tRNA(Gln) + L-glutamine + ATP + H2O = L-glutaminyl-tRNA(Gln) + L-glutamate + ADP + phosphate + H(+). In terms of biological role, allows the formation of correctly charged Gln-tRNA(Gln) through the transamidation of misacylated Glu-tRNA(Gln) in organisms which lack glutaminyl-tRNA synthetase. The reaction takes place in the presence of glutamine and ATP through an activated gamma-phospho-Glu-tRNA(Gln). The sequence is that of Glutamyl-tRNA(Gln) amidotransferase subunit A from Desulforapulum autotrophicum (strain ATCC 43914 / DSM 3382 / VKM B-1955 / HRM2) (Desulfobacterium autotrophicum).